Reading from the N-terminus, the 360-residue chain is S-adenosylmethionine:tRNA ribosyltransferase-isomerase (360 aa).

This sequence belongs to the QueA family. In terms of assembly, monomer.

The protein resides in the cytoplasm. The enzyme catalyses 7-aminomethyl-7-carbaguanosine(34) in tRNA + S-adenosyl-L-methionine = epoxyqueuosine(34) in tRNA + adenine + L-methionine + 2 H(+). It participates in tRNA modification; tRNA-queuosine biosynthesis. Its function is as follows. Transfers and isomerizes the ribose moiety from AdoMet to the 7-aminomethyl group of 7-deazaguanine (preQ1-tRNA) to give epoxyqueuosine (oQ-tRNA). This chain is S-adenosylmethionine:tRNA ribosyltransferase-isomerase, found in Rhodopseudomonas palustris (strain TIE-1).